The chain runs to 296 residues: Phosphoribosylaminoimidazole-succinocarboxamide synthase (296 aa).

It belongs to the SAICAR synthetase family.

The catalysed reaction is 5-amino-1-(5-phospho-D-ribosyl)imidazole-4-carboxylate + L-aspartate + ATP = (2S)-2-[5-amino-1-(5-phospho-beta-D-ribosyl)imidazole-4-carboxamido]succinate + ADP + phosphate + 2 H(+). It participates in purine metabolism; IMP biosynthesis via de novo pathway; 5-amino-1-(5-phospho-D-ribosyl)imidazole-4-carboxamide from 5-amino-1-(5-phospho-D-ribosyl)imidazole-4-carboxylate: step 1/2. The chain is Phosphoribosylaminoimidazole-succinocarboxamide synthase from Syntrophotalea carbinolica (strain DSM 2380 / NBRC 103641 / GraBd1) (Pelobacter carbinolicus).